A 263-amino-acid polypeptide reads, in one-letter code: uncharacterized protein (263 aa).

31–38 contributes to the ATP binding site; sequence GPTGSGKT.

This sequence belongs to the CbbQ/NirQ/NorQ/GpvN family.

This is an uncharacterized protein from Staphylococcus haemolyticus (strain JCSC1435).